Reading from the N-terminus, the 113-residue chain is Iron-sulfur cluster insertion protein ErpA (113 aa).

The iron-sulfur cluster site is built by C41, C105, and C107.

This sequence belongs to the HesB/IscA family. In terms of assembly, homodimer. The cofactor is iron-sulfur cluster.

Required for insertion of 4Fe-4S clusters for at least IspG. The polypeptide is Iron-sulfur cluster insertion protein ErpA (Actinobacillus pleuropneumoniae serotype 3 (strain JL03)).